The following is a 127-amino-acid chain: uncharacterized protein (127 aa).

Residues 91–113 form a helical membrane-spanning segment; the sequence is IYLIVSIAVSILAIIAFFIFLML.

The protein localises to the membrane. This is an uncharacterized protein from Bacillus subtilis (strain 168).